Consider the following 424-residue polypeptide: Mitogen-activated protein kinase mpkA (424 aa).

One can recognise a Protein kinase domain in the interval 23–314 (YNVTKELGQG…VEEALEHPYL (292 aa)). ATP is bound by residues 29–37 (LGQGAYGIV) and K52. The disordered stretch occupies residues 375-424 (QQIAQQTNVPIPDHQQGGWKQEEPKPQEVHAAGGHVNDLESSLQRGMDVQ).

The protein belongs to the protein kinase superfamily. Ser/Thr protein kinase family. Interacts with flbB, flbC, brlA, and rasB. Interacts with fmqA and fmqC. Interacts with hsp90. The cofactor is Mg(2+). Phosphorylated by the upstreamm MAPKK mkk2. Phosphorylation is induced during asexual development. Phosphorylation is regulated by rlmA.

The enzyme catalyses L-seryl-[protein] + ATP = O-phospho-L-seryl-[protein] + ADP + H(+). It catalyses the reaction L-threonyl-[protein] + ATP = O-phospho-L-threonyl-[protein] + ADP + H(+). With respect to regulation, activated by threonine and tyrosine phosphorylation by the upstreamm MAPKK mkk2. In terms of biological role, mitogen-activated protein kinase; part of cell wall integrity (CWI) signaling pathway composed of pkcA, the bck1-mkk2-mpka MAPK cascade and the downstream rlmA transcription regulator. The CWI signaling pathway regulates cell wall integrity and pyomelanin formation. CWI also controls oxidative stress response, gliotoxin production, iron adaptation and asexual development. Finally, CWI is constitutively required for A.fumigatus to cope with the temperature increase found in the mammalian lung environment, during infection. MpkA positively modulates the expression of fumiquinazoline cluster during conidiogenesis and directly phosphorylates fmqC, and perhaps also fmqA. This Aspergillus fumigatus (strain ATCC MYA-4609 / CBS 101355 / FGSC A1100 / Af293) (Neosartorya fumigata) protein is Mitogen-activated protein kinase mpkA.